A 523-amino-acid chain; its full sequence is Calcium-dependent protein kinase 34 (523 aa).

The interval 1–60 is disordered; it reads MGNCCSHGRDSDDNKEEPRPENGGGGVGAAEASVRASKHPPASPPPATKQGPIGPVLGRP. Gly2 carries the N-myristoyl glycine lipid modification. A compositionally biased stretch (basic and acidic residues) spans 7–20; it reads HGRDSDDNKEEPRP. One can recognise a Protein kinase domain in the interval 68–326; sequence YTLGKELGRG…AAQVLNHPWI (259 aa). ATP contacts are provided by residues 74-82 and Lys97; that span reads LGRGQFGVT. The active-site Proton acceptor is Asp192. Ser232 bears the Phosphoserine mark. The segment at 332–362 is autoinhibitory domain; the sequence is APDVPLDNAVMSRLKQFKAMNNFKKVALRVI. EF-hand domains are found at residues 369-404, 405-440, 441-476, and 480-511; these read EEIM…QGTR, LSEY…INRL, DREE…FGMN, and DIKE…GNPD. Residues Asp382, Asp384, Ser386, Thr388, Glu393, Asp418, Asp420, Asn422, Thr424, Glu429, Asp454, Asp456, Ser458, Tyr460, Glu465, Asp489, Asp491, Asp493, Arg495, and Glu500 each contribute to the Ca(2+) site.

This sequence belongs to the protein kinase superfamily. Ser/Thr protein kinase family. CDPK subfamily.

The protein localises to the membrane. The enzyme catalyses L-seryl-[protein] + ATP = O-phospho-L-seryl-[protein] + ADP + H(+). The catalysed reaction is L-threonyl-[protein] + ATP = O-phospho-L-threonyl-[protein] + ADP + H(+). Its activity is regulated as follows. Activated by calcium. Autophosphorylation may play an important role in the regulation of the kinase activity. Functionally, may play a role in signal transduction pathways that involve calcium as a second messenger. The protein is Calcium-dependent protein kinase 34 (CPK34) of Arabidopsis thaliana (Mouse-ear cress).